The following is a 60-amino-acid chain: Truncated protein A35 homolog (60 aa).

Belongs to the chordopoxvirinae A35 protein family.

The sequence is that of Truncated protein A35 homolog (A38R) from Variola virus (isolate Human/India/Ind3/1967) (VARV).